Reading from the N-terminus, the 210-residue chain is N-(5'-phosphoribosyl)anthranilate isomerase (210 aa).

Belongs to the TrpF family.

It catalyses the reaction N-(5-phospho-beta-D-ribosyl)anthranilate = 1-(2-carboxyphenylamino)-1-deoxy-D-ribulose 5-phosphate. It functions in the pathway amino-acid biosynthesis; L-tryptophan biosynthesis; L-tryptophan from chorismate: step 3/5. The polypeptide is N-(5'-phosphoribosyl)anthranilate isomerase (Crocosphaera subtropica (strain ATCC 51142 / BH68) (Cyanothece sp. (strain ATCC 51142))).